Here is a 591-residue protein sequence, read N- to C-terminus: MVTVVENTDPKIKPVPAVIKELEEKYAGKFVVQHTVDDIPTVWVARADLLDVLLFLRKLPKPYVMLFDLSAIDERLRQHRQGLPDSDFTVFYHLMSLERNSDVRIKVALSEEDLNVPSATQIWPNANWYEREVWDMFGIVFTGHPHLTRILLPKYWEGHPLRKEYHARATEFTPYFLNTAKQQYEQENLRFVPEEWGMKRSGRDEDFMFLNIGPNHPSAHGAFRLVLQLDGEEVVDCIPDIGYHHRGAEKMAERQTWHSFIPYTDRIDYLGGVMNELPYIMSVEKLAGITIPPRAETIRVMMSEFFRITNNLLFVGTFIQDAGGMTPVFYMFTDRQKAYDVIEAVTGYRMHPAWFRIGGTAHDLPRGWQRLVREFLDWMPKRLDEYVKAALQNSVLKGRTQGVAQYNTKQALAWGVTGAGLRATGLDFDLRKARPYMGYENYDFEVPVGYNGDAYDRCMVKVEEMRQSLRIIRQCMDNMPQGPYKADHPLAVPPPKDRTLNDIETLINHFISVSWGPVMPAGECTTIVEATKGLNSYYITSDKATMSYRTRIRTPTFAHLQQMPSVINGSLVSDAIMYLASIDIVMADCDR.

An NADH dehydrogenase I subunit C region spans residues 1–182 (MVTVVENTDP…TPYFLNTAKQ (182 aa)). The tract at residues 206–591 (DFMFLNIGPN…IDIVMADCDR (386 aa)) is NADH dehydrogenase I subunit D.

This sequence in the N-terminal section; belongs to the complex I 30 kDa subunit family. The protein in the C-terminal section; belongs to the complex I 49 kDa subunit family. In terms of assembly, NDH-1 is composed of 13 different subunits. Subunits NuoB, CD, E, F, and G constitute the peripheral sector of the complex.

It is found in the cell inner membrane. The catalysed reaction is a quinone + NADH + 5 H(+)(in) = a quinol + NAD(+) + 4 H(+)(out). NDH-1 shuttles electrons from NADH, via FMN and iron-sulfur (Fe-S) centers, to quinones in the respiratory chain. The immediate electron acceptor for the enzyme in this species is believed to be ubiquinone. Couples the redox reaction to proton translocation (for every two electrons transferred, four hydrogen ions are translocated across the cytoplasmic membrane), and thus conserves the redox energy in a proton gradient. This is NADH-quinone oxidoreductase subunit C/D from Psychrobacter cryohalolentis (strain ATCC BAA-1226 / DSM 17306 / VKM B-2378 / K5).